A 329-amino-acid chain; its full sequence is DNA-directed RNA polymerase subunit alpha (329 aa).

The alpha N-terminal domain (alpha-NTD) stretch occupies residues 1 to 235; that stretch reads MQNSIMDFLR…EQLEAFVDLR (235 aa). The interval 249-329 is alpha C-terminal domain (alpha-CTD); that stretch reads FEPILLRPVD…NWPPSSILDE (81 aa).

It belongs to the RNA polymerase alpha chain family. As to quaternary structure, homodimer. The RNAP catalytic core consists of 2 alpha, 1 beta, 1 beta' and 1 omega subunit. When a sigma factor is associated with the core the holoenzyme is formed, which can initiate transcription.

The enzyme catalyses RNA(n) + a ribonucleoside 5'-triphosphate = RNA(n+1) + diphosphate. DNA-dependent RNA polymerase catalyzes the transcription of DNA into RNA using the four ribonucleoside triphosphates as substrates. This is DNA-directed RNA polymerase subunit alpha from Buchnera aphidicola subsp. Acyrthosiphon pisum (strain APS) (Acyrthosiphon pisum symbiotic bacterium).